Consider the following 113-residue polypeptide: Fruiting body-specific class I hydrophobin fbh1 (113 aa).

A signal peptide spans 1-23; that stretch reads MFSIRIATVVLAASAALRPPARI. Intrachain disulfides connect Cys-33/Cys-92, Cys-40/Cys-86, Cys-41/Cys-73, and Cys-93/Cys-106.

Belongs to the fungal hydrophobin family. As to quaternary structure, self-assembles to form functional amyloid fibrils called rodlets. Self-assembly into fibrillar rodlets occurs spontaneously at hydrophobic:hydrophilic interfaces and the rodlets further associate laterally to form amphipathic monolayers.

Its subcellular location is the secreted. The protein localises to the cell wall. Aerial growth, conidiation, and dispersal of filamentous fungi in the environment rely upon a capability of their secreting small amphipathic proteins called hydrophobins (HPBs) with low sequence identity. Class I can self-assemble into an outermost layer of rodlet bundles on aerial cell surfaces, conferring cellular hydrophobicity that supports fungal growth, development and dispersal; whereas Class II form highly ordered films at water-air interfaces through intermolecular interactions but contribute nothing to the rodlet structure. Fbh1 is a fruiting body-specific class I hydrophobin that is involved in the growth rate and primordia formation. This is Fruiting body-specific class I hydrophobin fbh1 from Pleurotus ostreatus (Oyster mushroom).